The following is a 188-amino-acid chain: dCTP deaminase (188 aa).

Residue 107–112 coordinates dCTP; it reads KSTYAR. The active-site Proton donor/acceptor is the E133. DCTP is bound by residues Q152, Y166, and Q176.

It belongs to the dCTP deaminase family. Homotrimer.

It catalyses the reaction dCTP + H2O + H(+) = dUTP + NH4(+). The protein operates within pyrimidine metabolism; dUMP biosynthesis; dUMP from dCTP (dUTP route): step 1/2. Functionally, catalyzes the deamination of dCTP to dUTP. This is dCTP deaminase from Sulfurovum sp. (strain NBC37-1).